The sequence spans 357 residues: Meiotically up-regulated gene 135 protein (357 aa).

This sequence belongs to the UPF0612 family.

The protein localises to the nucleus. In terms of biological role, has a role in meiosis. This Schizosaccharomyces pombe (strain 972 / ATCC 24843) (Fission yeast) protein is Meiotically up-regulated gene 135 protein (mug135).